Reading from the N-terminus, the 446-residue chain is Phosphoglucosamine mutase (446 aa).

The active-site Phosphoserine intermediate is the serine 99. Positions 99, 242, 244, and 246 each coordinate Mg(2+). Serine 99 carries the phosphoserine modification.

The protein belongs to the phosphohexose mutase family. Mg(2+) is required as a cofactor. Activated by phosphorylation.

It catalyses the reaction alpha-D-glucosamine 1-phosphate = D-glucosamine 6-phosphate. Catalyzes the conversion of glucosamine-6-phosphate to glucosamine-1-phosphate. This is Phosphoglucosamine mutase from Campylobacter curvus (strain 525.92).